The sequence spans 278 residues: Chitosanase (278 aa).

An N-terminal signal peptide occupies residues 1-41 (MRLKHPTARLALAALLVAVPRSVAAAGTVHAAPAPAGATRL). The active-site Proton donor is Glu63. Asp81 (nucleophile) is an active-site residue.

The protein belongs to the glycosyl hydrolase 46 family.

The protein resides in the secreted. The catalysed reaction is Endohydrolysis of beta-(1-&gt;4)-linkages between D-glucosamine residues in a partly acetylated chitosan.. Its function is as follows. Aids in the defense against invading fungal pathogens by degrading their cell wall chitosan. This Nocardioides sp. (strain N106) protein is Chitosanase (csn).